The primary structure comprises 334 residues: Holliday junction branch migration complex subunit RuvB (334 aa).

The interval 4-184 is large ATPase domain (RuvB-L); it reads ADRLISAAVI…FGIVQRLEFY (181 aa). ATP contacts are provided by residues Ile-23, Arg-24, Gly-65, Lys-68, Thr-69, Thr-70, 131-133, Arg-174, Tyr-184, and Arg-221; that span reads EDY. Thr-69 is a binding site for Mg(2+). A small ATPAse domain (RuvB-S) region spans residues 185-255; sequence PVADLEHIVS…VAMKALDMLN (71 aa). The tract at residues 258-334 is head domain (RuvB-H); that stretch reads AEGFDFMDRK…YKHFGITREE (77 aa). Residues Arg-294, Arg-313, and Arg-318 each contribute to the DNA site.

Belongs to the RuvB family. In terms of assembly, homohexamer. Forms an RuvA(8)-RuvB(12)-Holliday junction (HJ) complex. HJ DNA is sandwiched between 2 RuvA tetramers; dsDNA enters through RuvA and exits via RuvB. An RuvB hexamer assembles on each DNA strand where it exits the tetramer. Each RuvB hexamer is contacted by two RuvA subunits (via domain III) on 2 adjacent RuvB subunits; this complex drives branch migration. In the full resolvosome a probable DNA-RuvA(4)-RuvB(12)-RuvC(2) complex forms which resolves the HJ.

Its subcellular location is the cytoplasm. The enzyme catalyses ATP + H2O = ADP + phosphate + H(+). Functionally, the RuvA-RuvB-RuvC complex processes Holliday junction (HJ) DNA during genetic recombination and DNA repair, while the RuvA-RuvB complex plays an important role in the rescue of blocked DNA replication forks via replication fork reversal (RFR). RuvA specifically binds to HJ cruciform DNA, conferring on it an open structure. The RuvB hexamer acts as an ATP-dependent pump, pulling dsDNA into and through the RuvAB complex. RuvB forms 2 homohexamers on either side of HJ DNA bound by 1 or 2 RuvA tetramers; 4 subunits per hexamer contact DNA at a time. Coordinated motions by a converter formed by DNA-disengaged RuvB subunits stimulates ATP hydrolysis and nucleotide exchange. Immobilization of the converter enables RuvB to convert the ATP-contained energy into a lever motion, pulling 2 nucleotides of DNA out of the RuvA tetramer per ATP hydrolyzed, thus driving DNA branch migration. The RuvB motors rotate together with the DNA substrate, which together with the progressing nucleotide cycle form the mechanistic basis for DNA recombination by continuous HJ branch migration. Branch migration allows RuvC to scan DNA until it finds its consensus sequence, where it cleaves and resolves cruciform DNA. This chain is Holliday junction branch migration complex subunit RuvB, found in Yersinia pestis bv. Antiqua (strain Angola).